Consider the following 219-residue polypeptide: Peptidyl-tRNA hydrolase (219 aa).

Residue tyrosine 26 coordinates tRNA. Histidine 31 functions as the Proton acceptor in the catalytic mechanism. 3 residues coordinate tRNA: tyrosine 78, asparagine 80, and asparagine 126.

It belongs to the PTH family. In terms of assembly, monomer.

The protein localises to the cytoplasm. The catalysed reaction is an N-acyl-L-alpha-aminoacyl-tRNA + H2O = an N-acyl-L-amino acid + a tRNA + H(+). Its function is as follows. Hydrolyzes ribosome-free peptidyl-tRNAs (with 1 or more amino acids incorporated), which drop off the ribosome during protein synthesis, or as a result of ribosome stalling. Catalyzes the release of premature peptidyl moieties from peptidyl-tRNA molecules trapped in stalled 50S ribosomal subunits, and thus maintains levels of free tRNAs and 50S ribosomes. In Trichodesmium erythraeum (strain IMS101), this protein is Peptidyl-tRNA hydrolase.